Consider the following 454-residue polypeptide: Asparagine--tRNA ligase (454 aa).

This sequence belongs to the class-II aminoacyl-tRNA synthetase family. As to quaternary structure, homodimer.

It localises to the cytoplasm. It catalyses the reaction tRNA(Asn) + L-asparagine + ATP = L-asparaginyl-tRNA(Asn) + AMP + diphosphate + H(+). The sequence is that of Asparagine--tRNA ligase from Mycoplasma capricolum subsp. capricolum (strain California kid / ATCC 27343 / NCTC 10154).